The primary structure comprises 333 residues: Eukaryotic translation initiation factor 2 subunit 2 (333 aa).

Disordered regions lie at residues 1-119 and 139-164; these read MSGD…DLDI and ILEK…NQTG. N-acetylserine is present on Ser-2. Phosphoserine is present on residues Ser-2 and Ser-13. A compositionally biased stretch (basic residues) spans 13–22; it reads SKKKKKKKKP. Residues Thr-31 and Thr-36 each carry the phosphothreonine modification. The segment covering 40 to 51 has biased composition (basic and acidic residues); sequence ETKEVEPEPTED. Ser-67 carries the post-translational modification Phosphoserine. Over residues 96–105 the composition is skewed to basic and acidic residues; the sequence is EGVKDLKIES. Residue Lys-102 forms a Glycyl lysine isopeptide (Lys-Gly) (interchain with G-Cter in SUMO2) linkage. Ser-105 is modified (phosphoserine). 2 stretches are compositionally biased toward acidic residues: residues 106-118 and 139-149; these read DVQE…DDLD and ILEKDEALEDE. Thr-111 bears the Phosphothreonine mark. Phosphoserine occurs at positions 158 and 218. N6-acetyllysine is present on residues Lys-265 and Lys-293. The C4-type zinc-finger motif lies at 281–305; sequence CHTCRSPDTILQKDTRLYFLQCETC.

The protein belongs to the eIF-2-beta/eIF-5 family. In terms of assembly, eukaryotic translation initiation factor 2 eIF2 is a heterotrimeric complex composed of an alpha (EIF2S1), a beta (EIF2S2) and a gamma (EIF2S3) chain. eIF2 is member of the 43S pre-initiation complex (43S PIC). eIF2 forms a complex with at least CELF1/CUGBP1, CALR, CALR3, EIF2S1, EIF2S2, HSP90B1 and HSPA5. Interacts with BZW2/5MP1. Interacts with EIF5.

It localises to the cytoplasm. Its subcellular location is the cytosol. Component of the eIF2 complex that functions in the early steps of protein synthesis by forming a ternary complex with GTP and initiator tRNA. This complex binds to a 40S ribosomal subunit, followed by mRNA binding to form the 43S pre-initiation complex (43S PIC). Junction of the 60S ribosomal subunit to form the 80S initiation complex is preceded by hydrolysis of the GTP bound to eIF2 and release of an eIF2-GDP binary complex. In order for eIF2 to recycle and catalyze another round of initiation, the GDP bound to eIF2 must exchange with GTP by way of a reaction catalyzed by eIF2B. The sequence is that of Eukaryotic translation initiation factor 2 subunit 2 (EIF2S2) from Pongo abelii (Sumatran orangutan).